Here is a 285-residue protein sequence, read N- to C-terminus: Small ribosomal subunit protein uS5x (285 aa).

Basic and acidic residues predominate over residues 1–19 (MAERGGERGVERGGERGDF). The segment at 1–51 (MAERGGERGVERGGERGDFGRGFGGRGGRGDRGGRGRGGRGGRRGGRASEE) is disordered. The span at 35 to 46 (RGRGGRGGRRGG) shows a compositional bias: basic residues. In terms of domain architecture, S5 DRBM spans 96–159 (LKDEVMKIMP…ILAKLSVVPV (64 aa)).

The protein belongs to the universal ribosomal protein uS5 family. In terms of assembly, interacts with MBD6.

Its function is as follows. Component of the ribosome, a large ribonucleoprotein complex responsible for the synthesis of proteins in the cell. The small ribosomal subunit (SSU) binds messenger RNAs (mRNAs) and translates the encoded message by selecting cognate aminoacyl-transfer RNA (tRNA) molecules. The large subunit (LSU) contains the ribosomal catalytic site termed the peptidyl transferase center (PTC), which catalyzes the formation of peptide bonds, thereby polymerizing the amino acids delivered by tRNAs into a polypeptide chain. The nascent polypeptides leave the ribosome through a tunnel in the LSU and interact with protein factors that function in enzymatic processing, targeting, and the membrane insertion of nascent chains at the exit of the ribosomal tunnel. Plays a role in the assembly and function of the 40S ribosomal subunit. Mutations in this protein affects the control of translational fidelity. Involved in nucleolar processing of pre-18S ribosomal RNA and ribosome assembly. Also involved in RNA-directed DNA methylation (RdDM). The sequence is that of Small ribosomal subunit protein uS5x from Arabidopsis thaliana (Mouse-ear cress).